We begin with the raw amino-acid sequence, 272 residues long: Insulin-like growth factor-binding protein 1 (272 aa).

The first 25 residues, M1 to G25, serve as a signal peptide directing secretion. The 82-residue stretch at Q28–E109 folds into the IGFBP N-terminal domain. Cystine bridges form between C32/C59, C35/C61, C43/C62, C50/C65, C73/C86, and C80/C106. A disordered region spans residues T115–T143. Residues S132–T143 are compositionally biased toward acidic residues. Residues S139, S157, and S169 each carry the phosphoserine modification. T170 carries the phosphothreonine modification. Y171 carries the post-translational modification Phosphotyrosine. In terms of domain architecture, Thyroglobulin type-1 spans K186 to C264. 3 disulfide bridges follow: C189–C219, C230–C241, and C243–C264. S255 carries the phosphoserine modification. A Cell attachment site motif is present at residues R259 to D261.

Binds equally well IGF1 and IGF2. Interacts with integrin ITGA5:ITGB1. Interacts with VHL; this interaction inhibits HIF1A degradation.

It localises to the secreted. In terms of biological role, multifunctional protein that plays a critical role in regulating the availability of IGFs such as IGF1 and IGF2 to their receptors and thereby regulates IGF-mediated cellular processes including cell migration, proliferation, differentiation or apoptosis in a cell-type specific manner. Also plays a positive role in cell migration by interacting with integrin ITGA5:ITGB1 through its RGD motif. Mechanistically, binding to integrins leads to activation of focal adhesion kinase/PTK2 and stimulation of the mitogen-activated protein kinase (MAPK) pathway. Regulates cardiomyocyte apoptosis by suppressing HIF-1alpha/HIF1A ubiquitination and subsequent degradation. The chain is Insulin-like growth factor-binding protein 1 (Igfbp1) from Rattus norvegicus (Rat).